Here is a 249-residue protein sequence, read N- to C-terminus: 5'-nucleotidase SurE (249 aa).

The a divalent metal cation site is built by Asp-8, Asp-9, Ser-39, and Asn-91.

Belongs to the SurE nucleotidase family. The cofactor is a divalent metal cation.

It is found in the cytoplasm. The catalysed reaction is a ribonucleoside 5'-phosphate + H2O = a ribonucleoside + phosphate. Its function is as follows. Nucleotidase that shows phosphatase activity on nucleoside 5'-monophosphates. The polypeptide is 5'-nucleotidase SurE (Haemophilus influenzae (strain ATCC 51907 / DSM 11121 / KW20 / Rd)).